The sequence spans 1412 residues: Protein MODIFIER OF SNC1 1 (1412 aa).

6 disordered regions span residues 1-276 (MTSS…QSYP), 384-437 (GYGS…TQRP), 472-798 (QQMQ…KQKQ), 827-888 (NEGV…DESI), 909-1144 (DIKV…WNDG), and 1156-1412 (AEEM…GDRN). Residues 56 to 103 (SWGSKSSLNAWGTSSLSPRTESGPGSPSHLSNRPSSGGSVTRPSTADS) are compositionally biased toward polar residues. Position 72 is a phosphoserine (S72). A compositionally biased stretch (low complexity) spans 109 to 119 (SSSSVAWDSNS). A compositionally biased stretch (polar residues) spans 120-135 (RPSSASGVFPSNQPSV). Basic and acidic residues-rich tracts occupy residues 197–207 (AEKDTSEKSTR) and 236–267 (ANDR…EGQL). The span at 478–488 (RNERREIRNDA) shows a compositional bias: basic and acidic residues. 4 stretches are compositionally biased toward polar residues: residues 517–531 (KTRT…SSVV), 539–553 (QPRT…NKVS), 565–581 (SKNS…TNKN), and 610–639 (RIVN…TNTE). A compositionally biased stretch (basic and acidic residues) spans 665–713 (DPKDNQRSTMRELARQRAQQRQKEEEERARDQRAKALAKLEELNRRSQI). Residues 667–717 (KDNQRSTMRELARQRAQQRQKEEEERARDQRAKALAKLEELNRRSQIYEEG) adopt a coiled-coil conformation. Polar residues-rich tracts occupy residues 738–749 (GSHSSNATNSVE), 756–779 (KNTT…QQDN), and 829–847 (GVSS…SAES). Residues 850 to 862 (PKRKNNRNGKKKH) are compositionally biased toward basic residues. Residues 877–888 (VGKETKSGDESI) show a composition bias toward basic and acidic residues. At S883 the chain carries Phosphoserine. Polar residues-rich tracts occupy residues 914–938 (GDSS…NWKS) and 983–1003 (QTTV…QTSS). Residues 1006–1023 (KRVEIERYVPKPIVKEMA) show a composition bias toward basic and acidic residues. The span at 1056–1070 (LQPSGSTAGKSGSPS) shows a compositional bias: polar residues. Residues 1071–1084 (KSRHGNGRQGKHGR) show a composition bias toward basic residues. Polar residues predominate over residues 1106–1137 (FVTSNQPIRGTVNYHSSKQTEQIAAKDQTTCN). Basic and acidic residues-rich tracts occupy residues 1191 to 1202 (DPKKGNKRDFNK), 1222 to 1232 (KEGRVPGDHVW), and 1242 to 1251 (GGRESTRDKP). 2 stretches are compositionally biased toward polar residues: residues 1266–1286 (GFTT…QNRS) and 1293–1307 (VEQN…NTGQ). Basic and acidic residues-rich tracts occupy residues 1338–1351 (SNRD…HYEY) and 1359–1369 (YDGERSREQSK). Positions 1384 to 1397 (QGQQRQGGYQQQRG) are enriched in low complexity. The segment covering 1400–1412 (GRNGGHGFTGDRN) has biased composition (gly residues).

In terms of assembly, interacts with TCP14 and TCP15.

Its function is as follows. Involved in the regulation of the chromatin structure and DNA methylation at the SNC1 locus. Regulates the expression of SNC1 at chromatin level. The protein is Protein MODIFIER OF SNC1 1 (MOS1) of Arabidopsis thaliana (Mouse-ear cress).